We begin with the raw amino-acid sequence, 664 residues long: Putative peroxisomal acyl-coenzyme A oxidase 1.2 (664 aa).

An FAD-binding site is contributed by 399 to 404; it reads CGGHGY. Residues 662–664 carry the Microbody targeting signal motif; sequence AKL.

Belongs to the acyl-CoA oxidase family. Requires FAD as cofactor.

The protein localises to the peroxisome. The catalysed reaction is a 2,3-saturated acyl-CoA + O2 = a (2E)-enoyl-CoA + H2O2. Functionally, catalyzes the desaturation of acyl-CoAs to 2-trans-enoyl-CoAs. This chain is Putative peroxisomal acyl-coenzyme A oxidase 1.2 (ACX1.2), found in Arabidopsis thaliana (Mouse-ear cress).